The chain runs to 237 residues: C-type lectin domain family 4 member A (237 aa).

At 1–48 (MTSEITYAEVRFKNEFKSSGINTASSAASKERTAPHKSNTGFPKLLCA) the chain is on the cytoplasmic side. Positions 5 to 10 (ITYAEV) match the ITIM motif motif. The helical; Signal-anchor for type II membrane protein transmembrane segment at 49-69 (SLLIFFLLLAISFFIAFVIFF) threads the bilayer. Residues 70–237 (QKYSQLLEKK…SVCEMMKIHL (168 aa)) lie on the Extracellular side of the membrane. Disulfide bonds link Cys-106/Cys-117, Cys-134/Cys-230, and Cys-203/Cys-222. Residues 113–231 (FSSNCYFIST…CLGPQRSVCE (119 aa)) enclose the C-type lectin domain. The Ca(2+) site is built by Val-143, Asn-145, and Glu-149. A glycan (N-linked (GlcNAc...) asparagine) is linked at Asn-185. Ca(2+) is bound by residues Glu-195, Ser-197, and Glu-201. Residues 195–197 (EPS) and Glu-201 contribute to the alpha-D-mannopyranose site. Residue 207-209 (NFR) coordinates N-acetyl-D-glucosamine. Residues Asn-218, Asp-219, and Glu-231 each contribute to the Ca(2+) site.

In terms of assembly, may interact with PTPN6 via its ITIM motif. As to expression, expressed preferentially in hematopoietic tissues. Expressed in all circulating Ag-presenting cells such as dendritic cells, myeloid cells, monocytes, macrophages, B-cells and epidermal Langerhans cells (at protein level). Expressed in peripheral blood leukocytes, neutrophils, moderate quantities in spleen, lymph node, and bone marrow, and at very low levels in thymus.

It localises to the cell membrane. In terms of biological role, C-type lectin receptor that binds carbohydrates mannose and fucose but also weakly interacts with N-acetylglucosamine (GlcNAc) in a Ca(2+)-dependent manner. Involved in regulating immune reactivity. Once triggered by antigen, it is internalized by clathrin-dependent endocytosis and delivers its antigenic cargo into the antigen presentation pathway resulting in cross-priming of CD8(+) T cells. This cross-presentation and cross-priming are enhanced by TLR7 and TLR8 agonists with increased expansion of the CD8(+) T cells, high production of IFNG and TNF with reduced levels of IL4, IL5 and IL13. In plasmacytoid dendritic cells, inhibits TLR9-mediated IFNA and TNF production. May be involved via its ITIM motif (immunoreceptor tyrosine-based inhibitory motifs) in the inhibition of B-cell-receptor-mediated calcium mobilization and protein tyrosine phosphorylation. (Microbial infection) Involved in the interaction between HIV-1 virus and dendritic cells. Enhances HIV-1 binding/entry and virus infection. Requires ITIM motif-associated signal transduction pathway involving phosphatases PTPN6 and PTPN11, SYK, Src kinases and MAP kinases. This chain is C-type lectin domain family 4 member A, found in Homo sapiens (Human).